Here is a 56-residue protein sequence, read N- to C-terminus: U-megalopygitoxin(2)-Mo9 (56 aa).

Positions Met1 to Pro25 are cleaved as a signal peptide. A Pyrrolidone carboxylic acid modification is found at Gln26. Position 55 is a threonine amide (Thr55).

It belongs to the caterpillar 2 family. Post-translationally, contains 2 disulfide bonds. As to expression, expressed by the venom apparatus.

Its subcellular location is the secreted. Functionally, probable toxin. The polypeptide is U-megalopygitoxin(2)-Mo9 (Megalopyge opercularis (Southern flannel moth)).